A 45-amino-acid chain; its full sequence is Large ribosomal subunit protein bL34 (45 aa).

A compositionally biased stretch (polar residues) spans 1-10 (MTQRTLGGTN). Positions 1-45 (MTQRTLGGTNRKQKRTSGFRARMRKSNGRKVIQARRKKGRHRLSV) are disordered. Positions 11-45 (RKQKRTSGFRARMRKSNGRKVIQARRKKGRHRLSV) are enriched in basic residues.

It belongs to the bacterial ribosomal protein bL34 family.

The protein is Large ribosomal subunit protein bL34 of Crocosphaera subtropica (strain ATCC 51142 / BH68) (Cyanothece sp. (strain ATCC 51142)).